A 101-amino-acid chain; its full sequence is Enhancer of yellow 2 transcription factor (101 aa).

Belongs to the ENY2 family. In terms of assembly, component of the nuclear pore complex (NPC)-associated AMEX complex (anchoring and mRNA export complex), composed of at least e(y)2 and xmas-2. Component of the SAGA transcription coactivator-HAT complexes, at least composed of Ada2b, e(y)2, Pcaf/Gcn5, Taf10 and Nipped-A/Trrap. Within the SAGA complex, e(y)2, Sgf11, and not/nonstop form an additional subcomplex of SAGA called the DUB module (deubiquitination module). Component of the THO complex, composed of at least e(y)2, HPR1, THO2, THOC5, THOC6 and THOC7. Interacts with e(y)1. Interacts with su(Hw) (via zinc fingers). Interacts with xmas-2; required for localization to the nuclear periphery. Interacts with the nuclear pore complex (NPC).

The protein localises to the nucleus. The protein resides in the nucleoplasm. It is found in the cytoplasm. Functionally, involved in mRNA export coupled transcription activation by association with both the AMEX and the SAGA complexes. The SAGA complex is a multiprotein complex that activates transcription by remodeling chromatin and mediating histone acetylation and deubiquitination. Within the SAGA complex, participates in a subcomplex that specifically deubiquitinates histone H2B. The SAGA complex is recruited to specific gene promoters by activators, where it is required for transcription. Required for nuclear receptor-mediated transactivation. Involved in transcription elongation by recruiting the THO complex onto nascent mRNA. The AMEX complex functions in docking export-competent ribonucleoprotein particles (mRNPs) to the nuclear entrance of the nuclear pore complex (nuclear basket). AMEX participates in mRNA export and accurate chromatin positioning in the nucleus by tethering genes to the nuclear periphery. This is Enhancer of yellow 2 transcription factor from Drosophila erecta (Fruit fly).